Reading from the N-terminus, the 709-residue chain is Phosphoribosylformylglycinamidine synthase subunit PurL (709 aa).

H36 is a catalytic residue. ATP is bound by residues Y39 and K80. Residue E82 participates in Mg(2+) binding. Substrate is bound by residues 83–86 and R105; that span reads SHNH. Residue H84 is the Proton acceptor of the active site. Residue D106 coordinates Mg(2+). Substrate is bound at residue Q226. Residue D252 coordinates Mg(2+). 294–296 lines the substrate pocket; it reads ETQ. ATP is bound by residues D470 and G507. S510 lines the substrate pocket.

The protein belongs to the FGAMS family. In terms of assembly, monomer. Part of the FGAM synthase complex composed of 1 PurL, 1 PurQ and 2 PurS subunits.

It localises to the cytoplasm. It carries out the reaction N(2)-formyl-N(1)-(5-phospho-beta-D-ribosyl)glycinamide + L-glutamine + ATP + H2O = 2-formamido-N(1)-(5-O-phospho-beta-D-ribosyl)acetamidine + L-glutamate + ADP + phosphate + H(+). It functions in the pathway purine metabolism; IMP biosynthesis via de novo pathway; 5-amino-1-(5-phospho-D-ribosyl)imidazole from N(2)-formyl-N(1)-(5-phospho-D-ribosyl)glycinamide: step 1/2. Functionally, part of the phosphoribosylformylglycinamidine synthase complex involved in the purines biosynthetic pathway. Catalyzes the ATP-dependent conversion of formylglycinamide ribonucleotide (FGAR) and glutamine to yield formylglycinamidine ribonucleotide (FGAM) and glutamate. The FGAM synthase complex is composed of three subunits. PurQ produces an ammonia molecule by converting glutamine to glutamate. PurL transfers the ammonia molecule to FGAR to form FGAM in an ATP-dependent manner. PurS interacts with PurQ and PurL and is thought to assist in the transfer of the ammonia molecule from PurQ to PurL. The chain is Phosphoribosylformylglycinamidine synthase subunit PurL from Saccharolobus islandicus (strain M.14.25 / Kamchatka #1) (Sulfolobus islandicus).